The primary structure comprises 154 residues: Low molecular weight protein-tyrosine-phosphatase PtpA (154 aa).

C8 (nucleophile) is an active-site residue. R14 is a catalytic residue. The active-site Proton donor is the D120.

It belongs to the low molecular weight phosphotyrosine protein phosphatase family.

The enzyme catalyses O-phospho-L-tyrosyl-[protein] + H2O = L-tyrosyl-[protein] + phosphate. In terms of biological role, dephosphorylates the phosphotyrosine-containing proteins. In Staphylococcus epidermidis (strain ATCC 35984 / DSM 28319 / BCRC 17069 / CCUG 31568 / BM 3577 / RP62A), this protein is Low molecular weight protein-tyrosine-phosphatase PtpA (ptpA).